The sequence spans 482 residues: Probable cytosol aminopeptidase (482 aa).

Lysine 251 and aspartate 256 together coordinate Mn(2+). The active site involves lysine 263. Residues aspartate 274, aspartate 333, and glutamate 335 each coordinate Mn(2+). Arginine 337 is an active-site residue.

This sequence belongs to the peptidase M17 family. Mn(2+) serves as cofactor.

It localises to the cytoplasm. The catalysed reaction is Release of an N-terminal amino acid, Xaa-|-Yaa-, in which Xaa is preferably Leu, but may be other amino acids including Pro although not Arg or Lys, and Yaa may be Pro. Amino acid amides and methyl esters are also readily hydrolyzed, but rates on arylamides are exceedingly low.. It catalyses the reaction Release of an N-terminal amino acid, preferentially leucine, but not glutamic or aspartic acids.. In terms of biological role, presumably involved in the processing and regular turnover of intracellular proteins. Catalyzes the removal of unsubstituted N-terminal amino acids from various peptides. The polypeptide is Probable cytosol aminopeptidase (Acinetobacter baylyi (strain ATCC 33305 / BD413 / ADP1)).